We begin with the raw amino-acid sequence, 312 residues long: Ribosomal protein L11 methyltransferase (312 aa).

The S-adenosyl-L-methionine site is built by Thr160, Gly181, Asp203, and Asn246.

Belongs to the methyltransferase superfamily. PrmA family.

It localises to the cytoplasm. It carries out the reaction L-lysyl-[protein] + 3 S-adenosyl-L-methionine = N(6),N(6),N(6)-trimethyl-L-lysyl-[protein] + 3 S-adenosyl-L-homocysteine + 3 H(+). In terms of biological role, methylates ribosomal protein L11. This chain is Ribosomal protein L11 methyltransferase, found in Staphylococcus aureus (strain USA300).